Consider the following 330-residue polypeptide: MVKVYYDADANLEFLKGKKIAVLGYGSQGHAQAQSLRDSGLDVVVGLRKDSARWSKAEADGLQVATVPDACAQAEVIQVLLPDEIQGRVYAEEIEPYLSEGKALMFSHGFNIHFGQIVPPKNVDVFLVAPKSPGHLVRRMYAEGKGVPGLVAVHQDYTGKAKDIALAYAKGIGCTKAGVFETSFREETETDLFGEQAVLCGGVSELIKAGFDTLVEAGYAPEMAYFECLHELKLIVDLIYEGGLSRMRYSVSNTAEYGDYMIGPRIVNEETREEMRQVLMEIQDGTFARNWMLENQVKSPQFNAVRKMEQEHPIEEVGARLREMMPWLKK.

One can recognise a KARI N-terminal Rossmann domain in the interval 2–182 (VKVYYDADAN…GCTKAGVFET (181 aa)). Residues 25–28 (YGSQ), Arg-48, Ser-51, and 83–86 (DEIQ) each bind NADP(+). Residue His-108 is part of the active site. Residue Gly-134 coordinates NADP(+). The KARI C-terminal knotted domain maps to 183–328 (SFREETETDL…ARLREMMPWL (146 aa)). Residues Asp-191, Glu-195, Glu-227, and Glu-231 each contribute to the Mg(2+) site. Ser-252 is a substrate binding site.

This sequence belongs to the ketol-acid reductoisomerase family. The cofactor is Mg(2+).

It catalyses the reaction (2R)-2,3-dihydroxy-3-methylbutanoate + NADP(+) = (2S)-2-acetolactate + NADPH + H(+). The enzyme catalyses (2R,3R)-2,3-dihydroxy-3-methylpentanoate + NADP(+) = (S)-2-ethyl-2-hydroxy-3-oxobutanoate + NADPH + H(+). It functions in the pathway amino-acid biosynthesis; L-isoleucine biosynthesis; L-isoleucine from 2-oxobutanoate: step 2/4. It participates in amino-acid biosynthesis; L-valine biosynthesis; L-valine from pyruvate: step 2/4. Its function is as follows. Involved in the biosynthesis of branched-chain amino acids (BCAA). Catalyzes an alkyl-migration followed by a ketol-acid reduction of (S)-2-acetolactate (S2AL) to yield (R)-2,3-dihydroxy-isovalerate. In the isomerase reaction, S2AL is rearranged via a Mg-dependent methyl migration to produce 3-hydroxy-3-methyl-2-ketobutyrate (HMKB). In the reductase reaction, this 2-ketoacid undergoes a metal-dependent reduction by NADPH to yield (R)-2,3-dihydroxy-isovalerate. The sequence is that of Ketol-acid reductoisomerase (NADP(+)) from Desulforamulus reducens (strain ATCC BAA-1160 / DSM 100696 / MI-1) (Desulfotomaculum reducens).